Here is an 882-residue protein sequence, read N- to C-terminus: Ion channel DMI1 (882 aa).

The tract at residues 1–122 (MAKSNEESSN…PSSSSITKQQ (122 aa)) is disordered. Positions 48-62 (TSTTKTDFSEQQWNY) are enriched in polar residues. Over residues 78–95 (PPPPPSKPPVNLIPPHPR) the composition is skewed to pro residues. A compositionally biased stretch (low complexity) spans 107 to 117 (SSLLPQPSSSS). Transmembrane regions (helical) follow at residues 129–149 (SPIF…SAYL), 192–212 (TIAL…YKYL), 255–275 (LALL…LYAV), and 307–327 (IVSV…LGLV). RCK N-terminal domains follow at residues 348–489 (RNHV…ETVV) and 608–757 (PEKI…DKSI). Positions 378–403 (VIVVLAEKEKEEMEMDIAKLEFDFMG) form a coiled coil.

Belongs to the castor/pollux (TC 1.A.1.23) family. In terms of assembly, interacts (via c-terminus) with CNGC15A, CNGC15B and CNGC15C (via N-terminus). The Nod factor has no effect on these interactions, implying that the complex is maintained after activation. In terms of tissue distribution, mainly expressed in roots and nodules. Also detected in pods, flowers, leaves, and stems.

It is found in the nucleus membrane. Its function is as follows. Required for early signal transduction events leading to endosymbiosis. Acts early in a signal transduction chain leading from the perception of Nod factor to the activation of calcium spiking. Also involved in mycorrhizal symbiosis. May be involved in the regulation of the calcium channel responsible for calcium spiking by mobilizing another cation, and thereby altering the membrane potential. This chain is Ion channel DMI1, found in Medicago truncatula (Barrel medic).